Reading from the N-terminus, the 714-residue chain is K(+)-insensitive pyrophosphate-energized proton pump (714 aa).

The first 20 residues, 1 to 20 (MRMTVIPIVILCGVLSVVYA), serve as a signal peptide directing secretion. Transmembrane regions (helical) follow at residues 52-74 (LTRQ…WYLL), 85-105 (GAVL…RANL), 128-148 (ITGM…YFVL), and 166-186 (VSLG…GGIF). Substrate is bound at residue lysine 188. Residues aspartate 191, aspartate 195, asparagine 218, and aspartate 221 each coordinate Mg(2+). The next 6 membrane-spanning stretches (helical) occupy residues 238 to 258 (AVSV…TPIL), 263 to 283 (VYPL…TFFV), 298 to 318 (GLIA…YATV), 333 to 353 (GTNL…IVVI), 383 to 403 (GLAV…GGII), and 411 to 431 (LFGT…IVAL). A Mg(2+)-binding site is contributed by aspartate 439. 4 helical membrane passes run 470–490 (AVTK…LFAA), 522–542 (YVVA…GIAM), 591–611 (VIPS…VLLI), and 618–638 (AFAA…FVAI). Ca(2+) is bound by residues aspartate 648, aspartate 680, and aspartate 684. Lysine 687 contacts substrate. The chain crosses the membrane as a helical span at residues 693–713 (AVNPAIKITNIVALLLLAVLA).

This sequence belongs to the H(+)-translocating pyrophosphatase (TC 3.A.10) family. K(+)-insensitive subfamily. In terms of assembly, homodimer. The cofactor is Mg(2+).

It localises to the acidocalcisome membrane. It catalyses the reaction diphosphate + H2O + H(+)(in) = 2 phosphate + 2 H(+)(out). Proton pump that utilizes the energy of pyrophosphate hydrolysis as the driving force for proton movement across the membrane. Generates a proton motive force. The chain is K(+)-insensitive pyrophosphate-energized proton pump from Agrobacterium fabrum (strain C58 / ATCC 33970) (Agrobacterium tumefaciens (strain C58)).